Reading from the N-terminus, the 115-residue chain is Phosphoribosyl-ATP pyrophosphatase (115 aa).

Belongs to the PRA-PH family.

Its subcellular location is the cytoplasm. It carries out the reaction 1-(5-phospho-beta-D-ribosyl)-ATP + H2O = 1-(5-phospho-beta-D-ribosyl)-5'-AMP + diphosphate + H(+). It functions in the pathway amino-acid biosynthesis; L-histidine biosynthesis; L-histidine from 5-phospho-alpha-D-ribose 1-diphosphate: step 2/9. The sequence is that of Phosphoribosyl-ATP pyrophosphatase from Saccharophagus degradans (strain 2-40 / ATCC 43961 / DSM 17024).